The following is a 156-amino-acid chain: MSLLIDFIDETEEVKEEYVNLIREILGKAAQMEKIEDGAELSVTFVDNERIREINRDYRDKDQPTDVISFAMEEMGEGEMEIVGVEMPRMLGDLIISIPRAKEQAEEYGHSFDRELGFLALHGFLHLLGYDHMTEEDEKEMFGRQKEILEAFGLGR.

Positions 122, 126, and 132 each coordinate Zn(2+).

This sequence belongs to the endoribonuclease YbeY family. Requires Zn(2+) as cofactor.

The protein localises to the cytoplasm. Single strand-specific metallo-endoribonuclease involved in late-stage 70S ribosome quality control and in maturation of the 3' terminus of the 16S rRNA. This is Endoribonuclease YbeY from Bacillus cereus (strain ZK / E33L).